Consider the following 184-residue polypeptide: Ribosome-recycling factor (184 aa).

This sequence belongs to the RRF family.

The protein resides in the cytoplasm. Its function is as follows. Responsible for the release of ribosomes from messenger RNA at the termination of protein biosynthesis. May increase the efficiency of translation by recycling ribosomes from one round of translation to another. The sequence is that of Ribosome-recycling factor from Lachnoclostridium phytofermentans (strain ATCC 700394 / DSM 18823 / ISDg) (Clostridium phytofermentans).